We begin with the raw amino-acid sequence, 369 residues long: Erythronate-4-phosphate dehydrogenase (369 aa).

The substrate site is built by serine 45 and threonine 66. Aspartate 146 contributes to the NAD(+) binding site. Arginine 209 is a catalytic residue. Aspartate 233 lines the NAD(+) pocket. The active site involves glutamate 238. Histidine 255 (proton donor) is an active-site residue. Glycine 258 serves as a coordination point for NAD(+).

This sequence belongs to the D-isomer specific 2-hydroxyacid dehydrogenase family. PdxB subfamily. Homodimer.

The protein localises to the cytoplasm. It carries out the reaction 4-phospho-D-erythronate + NAD(+) = (R)-3-hydroxy-2-oxo-4-phosphooxybutanoate + NADH + H(+). It functions in the pathway cofactor biosynthesis; pyridoxine 5'-phosphate biosynthesis; pyridoxine 5'-phosphate from D-erythrose 4-phosphate: step 2/5. Catalyzes the oxidation of erythronate-4-phosphate to 3-hydroxy-2-oxo-4-phosphonooxybutanoate. The polypeptide is Erythronate-4-phosphate dehydrogenase (Porphyromonas gingivalis (strain ATCC BAA-308 / W83)).